Consider the following 370-residue polypeptide: Aspartate beta-hydroxylase domain-containing protein 2 (370 aa).

Residues Met1 to Asn57 are Cytoplasmic-facing. A helical transmembrane segment spans residues Ser58 to Val78. The Lumenal portion of the chain corresponds to Gly79–Arg370. Asn212 carries an N-linked (GlcNAc...) asparagine glycan. 2-oxoglutarate is bound by residues Trp229 and Ser273. Fe cation is bound at residue His284. Arg293–His295 lines the 2-oxoglutarate pocket. Position 329 (His329) interacts with Fe cation. Residue Arg342 coordinates 2-oxoglutarate.

It belongs to the aspartyl/asparaginyl beta-hydroxylase family. The cofactor is Fe cation.

The protein localises to the membrane. Functionally, may function as 2-oxoglutarate-dependent dioxygenase. The chain is Aspartate beta-hydroxylase domain-containing protein 2 (asphd2) from Xenopus tropicalis (Western clawed frog).